The chain runs to 427 residues: Glutamyl-tRNA reductase (427 aa).

Residues 50–53 (TCNR), Ser110, 115–117 (ETQ), and Gln121 contribute to the substrate site. Cys51 acts as the Nucleophile in catalysis. An NADP(+)-binding site is contributed by 190 to 195 (GAGEMG).

It belongs to the glutamyl-tRNA reductase family. As to quaternary structure, homodimer.

The enzyme catalyses (S)-4-amino-5-oxopentanoate + tRNA(Glu) + NADP(+) = L-glutamyl-tRNA(Glu) + NADPH + H(+). Its pathway is porphyrin-containing compound metabolism; protoporphyrin-IX biosynthesis; 5-aminolevulinate from L-glutamyl-tRNA(Glu): step 1/2. In terms of biological role, catalyzes the NADPH-dependent reduction of glutamyl-tRNA(Glu) to glutamate 1-semialdehyde (GSA). This Campylobacter concisus (strain 13826) protein is Glutamyl-tRNA reductase.